The primary structure comprises 185 residues: Ribosome-recycling factor (185 aa).

The protein belongs to the RRF family.

Its subcellular location is the cytoplasm. In terms of biological role, responsible for the release of ribosomes from messenger RNA at the termination of protein biosynthesis. May increase the efficiency of translation by recycling ribosomes from one round of translation to another. The chain is Ribosome-recycling factor from Buchnera aphidicola subsp. Schizaphis graminum (strain Sg).